Here is a 427-residue protein sequence, read N- to C-terminus: Septin-8 (427 aa).

In terms of domain architecture, Septin-type G spans 39–305 (QGFCFNILCV…ELYRRCKLEE (267 aa)). A G1 motif region spans residues 49–56 (GETGIGKS). Residues 49 to 56 (GETGIGKS), glycine 104, 185 to 193 (KADTISKSE), glycine 239, and arginine 254 contribute to the GTP site. The interval 101 to 104 (DTVG) is G3 motif. A G4 motif region spans residues 184-187 (AKAD). Residues 321-409 (QETYEAKRKE…KAAMEALQSQ (89 aa)) are a coiled coil. The disordered stretch occupies residues 373-427 (RVHQEESKKVEDKRRDLEEEMNSFNRRKAAMEALQSQSFQATSQQPLKKDKDRKN). The segment covering 374–389 (VHQEESKKVEDKRRDL) has biased composition (basic and acidic residues). The span at 406–418 (LQSQSFQATSQQP) shows a compositional bias: polar residues.

The protein belongs to the TRAFAC class TrmE-Era-EngA-EngB-Septin-like GTPase superfamily. Septin GTPase family.

The protein localises to the cytoplasm. It localises to the cytoskeleton. It is found in the synapse. The protein resides in the cell projection. Its subcellular location is the axon. The protein localises to the cytoplasmic vesicle. It localises to the secretory vesicle. It is found in the synaptic vesicle membrane. The protein resides in the presynapse. The polypeptide is Septin-8 (Xenopus tropicalis (Western clawed frog)).